We begin with the raw amino-acid sequence, 231 residues long: Putative N-acetylmannosamine-6-phosphate 2-epimerase (231 aa).

It belongs to the NanE family.

It catalyses the reaction an N-acyl-D-glucosamine 6-phosphate = an N-acyl-D-mannosamine 6-phosphate. It functions in the pathway amino-sugar metabolism; N-acetylneuraminate degradation; D-fructose 6-phosphate from N-acetylneuraminate: step 3/5. Converts N-acetylmannosamine-6-phosphate (ManNAc-6-P) to N-acetylglucosamine-6-phosphate (GlcNAc-6-P). This chain is Putative N-acetylmannosamine-6-phosphate 2-epimerase, found in Glaesserella parasuis serovar 5 (strain SH0165) (Haemophilus parasuis).